We begin with the raw amino-acid sequence, 841 residues long: Probable alpha-glucuronidase A (841 aa).

The N-terminal stretch at M1–A19 is a signal peptide. N-linked (GlcNAc...) asparagine glycans are attached at residues N50, N104, N223, N280, N311, N344, N466, N528, N577, N683, N724, and N733.

It belongs to the glycosyl hydrolase 67 family.

It localises to the secreted. It catalyses the reaction an alpha-D-glucuronoside + H2O = D-glucuronate + an alcohol. Its function is as follows. Alpha-glucuronidase involved in the hydrolysis of xylan, a major structural heterogeneous polysaccharide found in plant biomass representing the second most abundant polysaccharide in the biosphere, after cellulose. Releases 4-O-methylglucuronic acid from xylan. The chain is Probable alpha-glucuronidase A (aguA) from Aspergillus terreus (strain NIH 2624 / FGSC A1156).